The chain runs to 613 residues: Dihydroxy-acid dehydratase (613 aa).

Residue D81 coordinates Mg(2+). C122 provides a ligand contact to [2Fe-2S] cluster. Residues D123 and K124 each contribute to the Mg(2+) site. K124 is modified (N6-carboxylysine). C195 contributes to the [2Fe-2S] cluster binding site. E491 is a Mg(2+) binding site. S517 serves as the catalytic Proton acceptor.

The protein belongs to the IlvD/Edd family. As to quaternary structure, homodimer. It depends on [2Fe-2S] cluster as a cofactor. Mg(2+) is required as a cofactor.

The enzyme catalyses (2R)-2,3-dihydroxy-3-methylbutanoate = 3-methyl-2-oxobutanoate + H2O. It carries out the reaction (2R,3R)-2,3-dihydroxy-3-methylpentanoate = (S)-3-methyl-2-oxopentanoate + H2O. It functions in the pathway amino-acid biosynthesis; L-isoleucine biosynthesis; L-isoleucine from 2-oxobutanoate: step 3/4. The protein operates within amino-acid biosynthesis; L-valine biosynthesis; L-valine from pyruvate: step 3/4. Its function is as follows. Functions in the biosynthesis of branched-chain amino acids. Catalyzes the dehydration of (2R,3R)-2,3-dihydroxy-3-methylpentanoate (2,3-dihydroxy-3-methylvalerate) into 2-oxo-3-methylpentanoate (2-oxo-3-methylvalerate) and of (2R)-2,3-dihydroxy-3-methylbutanoate (2,3-dihydroxyisovalerate) into 2-oxo-3-methylbutanoate (2-oxoisovalerate), the penultimate precursor to L-isoleucine and L-valine, respectively. The polypeptide is Dihydroxy-acid dehydratase (Vibrio vulnificus (strain YJ016)).